A 567-amino-acid chain; its full sequence is 2-succinyl-5-enolpyruvyl-6-hydroxy-3-cyclohexene-1-carboxylate synthase (567 aa).

Belongs to the TPP enzyme family. MenD subfamily. Homodimer. Requires Mg(2+) as cofactor. It depends on Mn(2+) as a cofactor. Thiamine diphosphate is required as a cofactor.

It carries out the reaction isochorismate + 2-oxoglutarate + H(+) = 5-enolpyruvoyl-6-hydroxy-2-succinyl-cyclohex-3-ene-1-carboxylate + CO2. Its pathway is quinol/quinone metabolism; 1,4-dihydroxy-2-naphthoate biosynthesis; 1,4-dihydroxy-2-naphthoate from chorismate: step 2/7. It functions in the pathway quinol/quinone metabolism; menaquinone biosynthesis. Functionally, catalyzes the thiamine diphosphate-dependent decarboxylation of 2-oxoglutarate and the subsequent addition of the resulting succinic semialdehyde-thiamine pyrophosphate anion to isochorismate to yield 2-succinyl-5-enolpyruvyl-6-hydroxy-3-cyclohexene-1-carboxylate (SEPHCHC). The sequence is that of 2-succinyl-5-enolpyruvyl-6-hydroxy-3-cyclohexene-1-carboxylate synthase from Shewanella loihica (strain ATCC BAA-1088 / PV-4).